Reading from the N-terminus, the 988-residue chain is Transcription regulator srbA precursor (988 aa).

The Cytoplasmic portion of the chain corresponds to 1–427 (MSTPGIGGDF…SSWHARAISH (427 aa)). Disordered stretches follow at residues 53–85 (AFPETANASPSSPFDLAFISPSASSGREASDAM) and 108–169 (GDLN…KKRA). The span at 125-136 (SLSVHSNSPLSS) shows a compositional bias: low complexity. Residues 165-178 (SKKRAHNVIEKRYR) form a basic motif region. The bHLH domain occupies 165 to 236 (SKKRAHNVIE…SKATEYIRHL (72 aa)). A helix-loop-helix motif region spans residues 179–236 (ANLNEKIAELRDSVPSLRASYKQANGNSGDDDDDGVTSASKLNKASILSKATEYIRHL). Residues 226–260 (LSKATEYIRHLEIRNKRLEEENTALKIRLRQLDKA) adopt a coiled-coil conformation. A compositionally biased stretch (polar residues) spans 267-291 (SAASVSSPSDCTVSTESGASSSPSV). A disordered region spans residues 267–313 (SAASVSSPSDCTVSTESGASSSPSVFSHAEDVPSDHSPTSSHPPEGL). The segment covering 301–310 (DHSPTSSHPP) has biased composition (low complexity). Residues 428-447 (FLMLAILVVGSAFIVFVYLF) traverse the membrane as a helical segment. Topologically, residues 448 to 988 (NSDPRRQYSA…SDNLLLSDES (541 aa)) are lumenal. Residues 866–881 (PPSPMSKASDMLSSSS) are compositionally biased toward low complexity. The tract at residues 866 to 900 (PPSPMSKASDMLSSSSDDGEDGASQRNNNIIPHPM) is disordered.

In terms of processing, in low oxygen or sterol conditions, undergoes proteolytic cleavage by rhomboid-type protease rbdB and is released as soluble transcription factor from the membrane.

It is found in the endoplasmic reticulum membrane. It localises to the nucleus. Its function is as follows. Precursor of the transcription factor srbA, which is embedded in the endoplasmic reticulum membrane. Low oxygen or sterol conditions promote processing of this form, releasing the transcription factor form that translocates into the nucleus and activates transcription of genes required for adaptation to anaerobic growth. Functionally, transcription factor that regulates sterol biosynthesis and hyphal morphology. Plays a critical role in ergosterol biosynthesis, resistance to the azole class of antifungal drugs, and in maintenance of cell polarity. Directly binds erg11A/cyp51A upstream DNA sequence at tandem repeats, called TR34 and TR46, that produce duplicated binding sites. Also mediates regulation of iron acquisition in response to hypoxia and low iron conditions via activation of extra- and intracellular siderophore production. Positively regulates the expression of the other hypoxia adaptation key transcription factor srbB. Required for the azole-sensing and response to azole stress. Binds the high-affinity sites 5'-A-T-C-G/A-T/G-A/G-C/T-G/C-A-T-3' of target promoters. Required for virulence in murine models of invasive pulmonary aspergillosis (IPA). The chain is Transcription regulator srbA precursor from Aspergillus fumigatus (strain ATCC MYA-4609 / CBS 101355 / FGSC A1100 / Af293) (Neosartorya fumigata).